A 707-amino-acid chain; its full sequence is Serine/threonine protein kinase UL97 (707 aa).

Low complexity predominate over residues 1–14 (MSSALRSRARSASL). Disordered regions lie at residues 1–33 (MSSA…SRAR), 113–146 (DGEK…GDGY), 176–198 (FTGG…RPLR), and 231–264 (ESQD…EADS). Residues 113-127 (DGEKEDAASDKENLR) are compositionally biased toward basic and acidic residues. Residues 178 to 188 (GGSDPSDSVSG) are compositionally biased toward low complexity. ATP-binding positions include 337–345 (LGQGSFGEV) and Lys359. Residue Asp456 is the Proton acceptor of the active site.

This sequence belongs to the protein kinase superfamily. Tyr protein kinase family. HCMV ganciclovir subfamily. As to quaternary structure, interacts with UL83. In terms of processing, autophosphorylates on serine and threonine residues.

Its subcellular location is the virion. The catalysed reaction is L-seryl-[protein] + ATP = O-phospho-L-seryl-[protein] + ADP + H(+). It catalyses the reaction L-threonyl-[protein] + ATP = O-phospho-L-threonyl-[protein] + ADP + H(+). In terms of biological role, serine/threonine protein kinase that plays important roles in several processes including nuclear viral egress, viral replication or regulation of host cell cycle progression. Participates in the acquisition of tegument during virion morphogenesis in the nucleus. Phosphorylates the viral nuclear egress complex (NEC) subunits UL50 and UL53. Redistributes the host nuclear lamina by phosphorylating cellular Lamins-A/C. Plays a role in viral DNA synthesis by phosphorylating the DNA polymerase processivity factor UL44. Stimulates host cell cycle to support viral DNA synthesis by phosphorylating host retinoblastoma/RB1 protein. Additional substrates have been identified including host EF1D or H2B. Also phosphorylates host SAMHD1 and thereby counteracts its antiviral effect by reducing its dNTP hydrolase activity. The sequence is that of Serine/threonine protein kinase UL97 (UL97) from Human cytomegalovirus (strain AD169) (HHV-5).